We begin with the raw amino-acid sequence, 343 residues long: 3-dehydroquinate synthase (343 aa).

NAD(+)-binding positions include 61–66 (SGEKYK), 95–99 (GVISD), 119–120 (TT), Lys-132, Lys-141, and 159–162 (FLKT). Zn(2+) contacts are provided by Glu-174, His-231, and His-248.

It belongs to the sugar phosphate cyclases superfamily. Dehydroquinate synthase family. Requires Co(2+) as cofactor. Zn(2+) serves as cofactor. It depends on NAD(+) as a cofactor.

Its subcellular location is the cytoplasm. It carries out the reaction 7-phospho-2-dehydro-3-deoxy-D-arabino-heptonate = 3-dehydroquinate + phosphate. It functions in the pathway metabolic intermediate biosynthesis; chorismate biosynthesis; chorismate from D-erythrose 4-phosphate and phosphoenolpyruvate: step 2/7. Its function is as follows. Catalyzes the conversion of 3-deoxy-D-arabino-heptulosonate 7-phosphate (DAHP) to dehydroquinate (DHQ). This is 3-dehydroquinate synthase from Helicobacter pylori (strain G27).